Consider the following 69-residue polypeptide: MKQEFSVKGMSCNHCVARIEEAVGRISGVKKVKVQLKKEKAVVKFDEANVQATEICQAINELGYQAEVI.

The HMA domain occupies Met-1–Glu-67. The Cu cation site is built by Cys-12 and Cys-15.

Monomer in the absence of copper. Homodimer or homooligomer in the presence of copper ions. Interacts with the copper ATPase CopA. Interacts with CopY via a charge-based interaction.

It localises to the cytoplasm. Functionally, acts as a copper chaperone by delivering 2 Cu(+) ions to CopY Zn(2+)-bound form. This transfer results in displacement of zinc and dissociation of CopY from the promoter, allowing transcription of the copYZAB operon. The chain is Copper chaperone CopZ (copZ) from Enterococcus hirae (strain ATCC 9790 / DSM 20160 / JCM 8729 / LMG 6399 / NBRC 3181 / NCIMB 6459 / NCDO 1258 / NCTC 12367 / WDCM 00089 / R).